A 143-amino-acid chain; its full sequence is Nucleoside diphosphate kinase (143 aa).

Residues K11, F59, R87, T93, R104, and N114 each coordinate ATP. H117 (pros-phosphohistidine intermediate) is an active-site residue.

This sequence belongs to the NDK family. As to quaternary structure, homotetramer. Mg(2+) serves as cofactor.

It is found in the cytoplasm. The enzyme catalyses a 2'-deoxyribonucleoside 5'-diphosphate + ATP = a 2'-deoxyribonucleoside 5'-triphosphate + ADP. It carries out the reaction a ribonucleoside 5'-diphosphate + ATP = a ribonucleoside 5'-triphosphate + ADP. In terms of biological role, major role in the synthesis of nucleoside triphosphates other than ATP. The ATP gamma phosphate is transferred to the NDP beta phosphate via a ping-pong mechanism, using a phosphorylated active-site intermediate. The protein is Nucleoside diphosphate kinase of Salmonella arizonae (strain ATCC BAA-731 / CDC346-86 / RSK2980).